We begin with the raw amino-acid sequence, 113 residues long: MKVFSTSLWCGLLTLLSVMNLFKSVRGRPHLSSGHELFPAKEHAAQEKLTRNPGLQRPFHAGGDLPSKLEELRQVKKLRDWIMEAKNTGLSNALDNLSSSHTKKRACFWKYCV.

Positions 1–27 (MKVFSTSLWCGLLTLLSVMNLFKSVRG) are cleaved as a signal peptide. A propeptide spanning residues 28-103 (RPHLSSGHEL…LDNLSSSHTK (76 aa)) is cleaved from the precursor. Cysteine 107 and cysteine 112 are joined by a disulfide.

This sequence belongs to the urotensin-2 family.

Its subcellular location is the secreted. Functionally, potent vasoconstrictor. The sequence is that of Urotensin-2B (Uts2b) from Mus musculus (Mouse).